A 428-amino-acid polypeptide reads, in one-letter code: MFVDQTKIDVQAGKGGDGAVAFRHEKYVPLGGPAGGDGGRGGSIILVADSGLRTLMDFRFRRKFKADNGENGRIKSQYGRGAKDVRLKVPMGTSVYDFNTGELLGDLVENGQELVVAHGGKGGRGNIHFATPTRTAPEIAENGEPGEFRTLRLELKVLADVGLVGFPSVGKSTLLSVVTKAKPKIAAYEFTTLTPNLGMVVLPDGRDFSMADLPGLIEGASKGVGLGIQFLRHVERTKVILHLVSMDPNNGRDAYEDYETIRKELAGYTKDLTTKKEIIVATQMDIPGSEEKFAEFKKKLGDKTVYPISSVTHKGVSELMGKTADLVEEVAKEEAEKPAEIKVAEKEYVYKKPEDEGFKVERTGEHSFVVTGNKLERLVQRTNLDHTDGIMLLARKLKRLGVDEALRENGAVTGDDVSIADFTFEFVD.

The 158-residue stretch at 1-158 (MFVDQTKIDV…RTLRLELKVL (158 aa)) folds into the Obg domain. One can recognise an OBG-type G domain in the interval 159-328 (ADVGLVGFPS…LMGKTADLVE (170 aa)). GTP is bound by residues 165–172 (GFPSVGKS), 190–194 (FTTLT), 212–215 (DLPG), 282–285 (TQMD), and 309–311 (SSV). Positions 172 and 192 each coordinate Mg(2+). The OCT domain maps to 350–428 (YKKPEDEGFK…IADFTFEFVD (79 aa)).

The protein belongs to the TRAFAC class OBG-HflX-like GTPase superfamily. OBG GTPase family. Monomer. Mg(2+) serves as cofactor.

The protein resides in the cytoplasm. An essential GTPase which binds GTP, GDP and possibly (p)ppGpp with moderate affinity, with high nucleotide exchange rates and a fairly low GTP hydrolysis rate. Plays a role in control of the cell cycle, stress response, ribosome biogenesis and in those bacteria that undergo differentiation, in morphogenesis control. The polypeptide is GTPase Obg (Lactobacillus johnsonii (strain CNCM I-12250 / La1 / NCC 533)).